The primary structure comprises 224 residues: UPF0758 protein VS_0182 (224 aa).

Residues 1 to 21 are disordered; the sequence is MPISKMPVESMPREKLLSRGP. Residues 102-224 form the MPN domain; it reads ALTSPSHTKL…VISFAERGWI (123 aa). Zn(2+)-binding residues include His173, His175, and Asp186. Residues 173 to 186 carry the JAMM motif motif; that stretch reads HNHPSGVAEPSQAD.

The protein belongs to the UPF0758 family.

This is UPF0758 protein VS_0182 from Vibrio atlanticus (strain LGP32) (Vibrio splendidus (strain Mel32)).